Reading from the N-terminus, the 705-residue chain is Ribosomal RNA large subunit methyltransferase K/L (705 aa).

Positions 43–154 constitute a THUMP domain; sequence VVYRCCLWSR…GEKGILGFDL (112 aa).

Belongs to the methyltransferase superfamily. RlmKL family.

Its subcellular location is the cytoplasm. The catalysed reaction is guanosine(2445) in 23S rRNA + S-adenosyl-L-methionine = N(2)-methylguanosine(2445) in 23S rRNA + S-adenosyl-L-homocysteine + H(+). It carries out the reaction guanosine(2069) in 23S rRNA + S-adenosyl-L-methionine = N(2)-methylguanosine(2069) in 23S rRNA + S-adenosyl-L-homocysteine + H(+). Its function is as follows. Specifically methylates the guanine in position 2445 (m2G2445) and the guanine in position 2069 (m7G2069) of 23S rRNA. The polypeptide is Ribosomal RNA large subunit methyltransferase K/L (Aliivibrio fischeri (strain ATCC 700601 / ES114) (Vibrio fischeri)).